Consider the following 204-residue polypeptide: High mobility group-T protein (204 aa).

2 consecutive DNA-binding regions (HMG box) follow at residues 8-78 (PRGK…RSYI) and 94-162 (PKRP…TAYR). The disordered stretch occupies residues 162-204 (RNKGKVPVSMPAKAAAPAKDDDDDDDDDDDDEDDDDDDDEDDE). The segment covering 181–204 (DDDDDDDDDDDDEDDDDDDDEDDE) has biased composition (acidic residues).

It belongs to the HMGB family.

It is found in the nucleus. The protein localises to the chromosome. Its function is as follows. Binds preferentially single-stranded DNA and unwinds double-stranded DNA. This chain is High mobility group-T protein, found in Oncorhynchus mykiss (Rainbow trout).